The sequence spans 510 residues: Inositol-3-phosphate synthase (510 aa).

Residues glycine 70, glycine 71, asparagine 72, asparagine 73, aspartate 143, isoleucine 180, glutamine 190, arginine 193, threonine 230, alanine 231, asparagine 232, threonine 233, glycine 281, serine 282, aspartate 306, serine 309, asparagine 340, asparagine 341, aspartate 342, lysine 355, glycine 393, aspartate 394, aspartate 422, and serine 423 each contribute to the NAD(+) site.

It belongs to the myo-inositol 1-phosphate synthase family. It depends on NAD(+) as a cofactor.

It localises to the cytoplasm. The protein resides in the cytosol. The protein localises to the nucleus. It catalyses the reaction D-glucose 6-phosphate = 1D-myo-inositol 3-phosphate. It participates in polyol metabolism; myo-inositol biosynthesis; myo-inositol from D-glucose 6-phosphate: step 1/2. Functionally, key enzyme in myo-inositol biosynthesis pathway that catalyzes the conversion of glucose 6-phosphate to 1-myo-inositol 1-phosphate in a NAD-dependent manner. The protein is Inositol-3-phosphate synthase of Hordeum vulgare (Barley).